The primary structure comprises 631 residues: Glycosyltransferase-like protein LARGE (631 aa).

Over 1 to 6 (MQSNYS) the chain is Cytoplasmic. The helical; Signal-anchor for type II membrane protein transmembrane segment at 7 to 27 (ISYFLLILFTGTSSYFTIWNF) threads the bilayer. The Lumenal portion of the chain corresponds to 28–631 (VDHTRVGAFP…TASRLGIKLR (604 aa)). 11 N-linked (GlcNAc...) asparagine glycosylation sites follow: N95, N105, N167, N177, N287, N400, N485, N502, N521, N529, and N593.

Belongs to the glycosyltransferase 8 family.

It localises to the golgi apparatus membrane. Probable glycosyltransferase. This Caenorhabditis elegans protein is Glycosyltransferase-like protein LARGE (lge-1).